Reading from the N-terminus, the 690-residue chain is DNA topoisomerase 1 (690 aa).

The Toprim domain maps to aspartate 3–alanine 121. Mg(2+) is bound by residues glutamate 9 and aspartate 82. A Topo IA-type catalytic domain is found at asparagine 129–leucine 558. Residues serine 163–glutamine 168 are interaction with DNA. The O-(5'-phospho-DNA)-tyrosine intermediate role is filled by tyrosine 298. A disordered region spans residues asparagine 329 to arginine 354. Residues lysine 339–arginine 354 are compositionally biased toward basic and acidic residues. C4-type zinc fingers lie at residues cysteine 579 to cysteine 605, cysteine 619 to cysteine 647, and cysteine 660 to cysteine 683.

It belongs to the type IA topoisomerase family. As to quaternary structure, monomer. It depends on Mg(2+) as a cofactor.

The enzyme catalyses ATP-independent breakage of single-stranded DNA, followed by passage and rejoining.. Releases the supercoiling and torsional tension of DNA, which is introduced during the DNA replication and transcription, by transiently cleaving and rejoining one strand of the DNA duplex. Introduces a single-strand break via transesterification at a target site in duplex DNA. The scissile phosphodiester is attacked by the catalytic tyrosine of the enzyme, resulting in the formation of a DNA-(5'-phosphotyrosyl)-enzyme intermediate and the expulsion of a 3'-OH DNA strand. The free DNA strand then undergoes passage around the unbroken strand, thus removing DNA supercoils. Finally, in the religation step, the DNA 3'-OH attacks the covalent intermediate to expel the active-site tyrosine and restore the DNA phosphodiester backbone. The polypeptide is DNA topoisomerase 1 (Halalkalibacterium halodurans (strain ATCC BAA-125 / DSM 18197 / FERM 7344 / JCM 9153 / C-125) (Bacillus halodurans)).